A 193-amino-acid polypeptide reads, in one-letter code: Adenylate kinase (193 aa).

10-15 contributes to the ATP binding site; sequence GAGKGT. The NMP stretch occupies residues 30–59; the sequence is STGDMLRAAVKAGTPIGLKAKAVMDAGGLV. AMP contacts are provided by residues Thr31, Arg36, 57 to 59, 85 to 88, and Gln92; these read GLV and GFPR. The LID stretch occupies residues 126-142; sequence KRAKETLAAGGTVRADD. Arg127 provides a ligand contact to ATP. 2 residues coordinate AMP: Arg139 and Arg150. Ala178 is an ATP binding site.

The protein belongs to the adenylate kinase family. In terms of assembly, monomer.

Its subcellular location is the cytoplasm. It catalyses the reaction AMP + ATP = 2 ADP. It functions in the pathway purine metabolism; AMP biosynthesis via salvage pathway; AMP from ADP: step 1/1. Catalyzes the reversible transfer of the terminal phosphate group between ATP and AMP. Plays an important role in cellular energy homeostasis and in adenine nucleotide metabolism. This Beijerinckia indica subsp. indica (strain ATCC 9039 / DSM 1715 / NCIMB 8712) protein is Adenylate kinase.